The primary structure comprises 362 residues: 3-dehydroquinate synthase (362 aa).

This sequence belongs to the archaeal-type DHQ synthase family.

The enzyme catalyses 2-amino-2,3,7-trideoxy-D-lyxo-hept-6-ulosonate + NAD(+) + H2O = 3-dehydroquinate + NH4(+) + NADH + H(+). Functionally, catalyzes the oxidative deamination and cyclization of 2-amino-3,7-dideoxy-D-threo-hept-6-ulosonic acid (ADH) to yield 3-dehydroquinate (DHQ), which is fed into the canonical shikimic pathway of aromatic amino acid biosynthesis. This chain is 3-dehydroquinate synthase, found in Methanococcus aeolicus (strain ATCC BAA-1280 / DSM 17508 / OCM 812 / Nankai-3).